Here is a 131-residue protein sequence, read N- to C-terminus: MAQIPARGDCSRQLTRKQAGDAWEAAARRWLESKGLRFIAANVRERGGEIDLIMRDGKTTVFVEVRYRRSGLYGGAAASVTHSKQHKLLHTARLWLARQNGSFDTVDCRFDVLAFTGNEIEWFRDAFNDHS.

The protein belongs to the UPF0102 family.

The chain is UPF0102 protein YraN from Salmonella agona (strain SL483).